Consider the following 261-residue polypeptide: Small ribosomal subunit protein uS2 (261 aa).

Positions 223-261 (EGKQGQDDSEDVEKEMADKAAAEDDEEESIEVVVEKSED) are disordered.

The protein belongs to the universal ribosomal protein uS2 family.

The polypeptide is Small ribosomal subunit protein uS2 (Lactobacillus johnsonii (strain CNCM I-12250 / La1 / NCC 533)).